Here is a 96-residue protein sequence, read N- to C-terminus: Co-chaperonin GroES (96 aa).

This sequence belongs to the GroES chaperonin family. Heptamer of 7 subunits arranged in a ring. Interacts with the chaperonin GroEL.

Its subcellular location is the cytoplasm. In terms of biological role, together with the chaperonin GroEL, plays an essential role in assisting protein folding. The GroEL-GroES system forms a nano-cage that allows encapsulation of the non-native substrate proteins and provides a physical environment optimized to promote and accelerate protein folding. GroES binds to the apical surface of the GroEL ring, thereby capping the opening of the GroEL channel. This is Co-chaperonin GroES from Neisseria meningitidis serogroup B (strain ATCC BAA-335 / MC58).